The primary structure comprises 533 residues: Glucose-6-phosphate isomerase (533 aa).

Catalysis depends on Glu330, which acts as the Proton donor. Active-site residues include His359 and Lys461.

This sequence belongs to the GPI family.

The protein resides in the cytoplasm. It carries out the reaction alpha-D-glucose 6-phosphate = beta-D-fructose 6-phosphate. The protein operates within carbohydrate biosynthesis; gluconeogenesis. It functions in the pathway carbohydrate degradation; glycolysis; D-glyceraldehyde 3-phosphate and glycerone phosphate from D-glucose: step 2/4. Catalyzes the reversible isomerization of glucose-6-phosphate to fructose-6-phosphate. The protein is Glucose-6-phosphate isomerase of Prochlorococcus marinus (strain SARG / CCMP1375 / SS120).